Consider the following 181-residue polypeptide: Regulator of G-protein signaling 5 (181 aa).

Positions 64–180 constitute an RGS domain; it reads SLDKLLQSNY…VRSEFYKELI (117 aa).

Its subcellular location is the cytoplasm. The protein localises to the membrane. Its function is as follows. Inhibits signal transduction by increasing the GTPase activity of G protein alpha subunits thereby driving them into their inactive GDP-bound form. Binds to G(i)-alpha and G(o)-alpha, but not to G(s)-alpha. In Rattus norvegicus (Rat), this protein is Regulator of G-protein signaling 5 (Rgs5).